The chain runs to 362 residues: Outer mitochondrial transmembrane helix translocase (362 aa).

Topologically, residues 1–19 (MVLKEIPTENITRPLGRNE) are mitochondrial intermembrane. A helical transmembrane segment spans residues 20 to 42 (VIGLLFRLTIFGAVTYFTIKWMV). Over 43–362 (DAIDPTRKQK…HEAFMQVPLD (320 aa)) the chain is Cytoplasmic. 137–144 (GPPGCGKT) lines the ATP pocket.

Belongs to the AAA ATPase family. MSP1 subfamily.

The protein resides in the mitochondrion outer membrane. Its subcellular location is the peroxisome membrane. It localises to the postsynaptic cell membrane. The catalysed reaction is [protein]-with a C-terminal TM segment(out) + ATP + H2O = [protein]-with a C-terminal TM segment(in) + ADP + phosphate + H(+). In terms of biological role, outer mitochondrial translocase required to remove mislocalized tail-anchored transmembrane proteins on mitochondria. Specifically recognizes and binds tail-anchored transmembrane proteins: acts as a dislocase that mediates the ATP-dependent extraction of mistargeted tail-anchored transmembrane proteins from the mitochondrion outer membrane. Also plays a critical role in regulating the surface expression of AMPA receptors (AMPAR), thereby regulating synaptic plasticity and learning and memory. This Danio rerio (Zebrafish) protein is Outer mitochondrial transmembrane helix translocase.